Reading from the N-terminus, the 582-residue chain is Myoneurin (582 aa).

Residues 24-89 (CDCTIVIGEF…IYTGTLNLDS (66 aa)) enclose the BTB domain. The segment at 169 to 197 (QGALAKKSSQTKKKKKAFNSPKTGQNKTV) is disordered. 2 consecutive short sequence motifs (nuclear localization signal) follow at residues 174-190 (KKSS…NSPK) and 257-262 (KRKRGK). The span at 188–197 (SPKTGQNKTV) shows a compositional bias: polar residues. Position 289 is a phosphoserine (Ser-289). The C2H2-type 1; degenerate zinc-finger motif lies at 302 to 324 (PMCNTRGKVFSEASSLRRHMRIH). C2H2-type zinc fingers lie at residues 330–352 (YVCH…VRTH), 358–381 (YKCE…RMHH), 387–409 (YKCD…ARKH), 415–437 (YVCD…VRRH), 443–465 (YVCD…SRKH), and 471–494 (FICE…TKVH). Residues 489 to 538 (HKTKVHSGADKTPDSSAEDHTLSEQDSIQKSPLSETMDVKPSDTTLPLAL) are disordered. Residues 495–511 (SGADKTPDSSAEDHTLS) show a composition bias toward basic and acidic residues. Positions 512 to 522 (EQDSIQKSPLS) are enriched in polar residues.

It belongs to the krueppel C2H2-type zinc-finger protein family.

The protein localises to the nucleus. This chain is Myoneurin (MYNN), found in Pongo abelii (Sumatran orangutan).